The following is a 486-amino-acid chain: MSLEDSLRSLSLDYLNLLINGQAFSDVTFSVEGRLVHAHRCILAARSLFFRKFFCGGSDPSASSGLIDQTGVRVNPSGSPRSSNGVLVIPVNSVGYEVFLLLLQFLYSGQVSIVPQKHEARPNCGERGCWHTHCSSAVDLALDTLAAARYFGVEQLALLTQKQLASMVEKASIEDVMKVLLASRKQDMQQLWTTCSHLVAKSGLPPEVLAKHLPIEIVAKIEELRLKSSIARRSMMPHHHHHHHPHDLNAAADLEDQKIRRMRRALDSSDVELVKLMVMGEGLNLDEALALHYAVENCSREVAKALLELGAADVNYPAGPAGKTPLHIAAEMVSPDMVAVLLDHHADPNVRTVDNVTPLDILRTLTSDFLFKGAIPGLTHIEPNKLRLCLELVQSAALVLSREEGNANNNPPSSTTTTLPMYHHPMNDDHNSSSSSGNNHNIGNLNLDSRLVYLNLGATVGSGQMSDDHGGRHGDPAMYHHSHHDY.

A BTB domain is found at 25-115 (SDVTFSVEGR…LYSGQVSIVP (91 aa)). The C2HC NPR-type zinc-finger motif lies at 121-135 (RPNCGERGCWHTHCS). Zn(2+)-binding residues include cysteine 124, cysteine 129, histidine 131, and cysteine 134. ANK repeat units follow at residues 257 to 286 (QKIRRMRRALDSSDVELVKLMVMGEGLNLD), 287 to 316 (EALALHYAVENCSREVAKALLELGAADVNY), 321 to 350 (AGKTPLHIAAEMVSPDMVAVLLDHHADPNV), and 354 to 388 (DNVTPLDILRTLTSDFLFKGAIPGLTHIEPNKLRL). Disordered regions lie at residues 403–442 (EEGNANNNPPSSTTTTLPMYHHPMNDDHNSSSSSGNNHNI) and 464–486 (QMSDDHGGRHGDPAMYHHSHHDY). 2 stretches are compositionally biased toward low complexity: residues 406-418 (NANNNPPSSTTTT) and 432-442 (SSSSSGNNHNI). Over residues 466–475 (SDDHGGRHGD) the composition is skewed to basic and acidic residues.

Belongs to the plant 'ANKYRIN-BTB/POZ' family. 'NOOT-BOP-COCH-like' (NBCL) subfamily. Homodimer. In terms of tissue distribution, expressed in xylem vessels and parenchyma cells of pedicel vascular tissue in the abscission zone (AZ). Accumulates in developing root nodules and present in roots, especially in the upper part.

It localises to the nucleus. It is found in the cytoplasm. The protein resides in the cell membrane. Its pathway is protein modification; protein ubiquitination. May act as a substrate-specific adapter of an E3 ubiquitin-protein ligase complex (CUL3-RBX1-BTB) which mediates the ubiquitination and subsequent proteasomal degradation of target proteins. Transcriptional co-regulator involved in promoting the fate and determination of leaf and flower meristems. Required for the abscission of senescent organs, probably by regulating the cell wall disorganization in abscission zones (AZs, e.g. pulvini at the base of leaves). Involved in the coordination of the symbiotic nodule developmental program; promotes the formation of root nodules by interacting directly with APP1 to modulate the expression of the nuclear transcription factor Y subunit (NF-YA1), a key nodulin. Necessary for the robust maintenance of nodule identity throughout the nodule developmental program. The polypeptide is BTB/POZ domain and ankyrin repeat-containing protein BOP (Lupinus luteus (European yellow lupine)).